Reading from the N-terminus, the 147-residue chain is Hemoglobin subunit beta (147 aa).

The region spanning 2–147 is the Globin domain; sequence HWEDAEKQYI…ISHSLGREYH (146 aa). The heme b site is built by histidine 63 and histidine 92.

It belongs to the globin family. Heterotetramer of two alpha chains and two beta chains. As to expression, red blood cells.

Involved in oxygen transport from the lung to the various peripheral tissues. This is Hemoglobin subunit beta (HBB) from Lepidosiren paradoxus (South American lungfish).